The following is a 276-amino-acid chain: NH(3)-dependent NAD(+) synthetase (276 aa).

Gly43 to Ser50 contacts ATP. Mg(2+) is bound at residue Asp49. Deamido-NAD(+) is bound at residue Arg146. Thr166 is an ATP binding site. Residue Glu171 coordinates Mg(2+). The deamido-NAD(+) site is built by Lys179 and Asp186. Residues Lys195 and Thr217 each contribute to the ATP site. A deamido-NAD(+)-binding site is contributed by His266–Lys267.

The protein belongs to the NAD synthetase family. In terms of assembly, homodimer.

It carries out the reaction deamido-NAD(+) + NH4(+) + ATP = AMP + diphosphate + NAD(+) + H(+). It functions in the pathway cofactor biosynthesis; NAD(+) biosynthesis; NAD(+) from deamido-NAD(+) (ammonia route): step 1/1. In terms of biological role, catalyzes the ATP-dependent amidation of deamido-NAD to form NAD. Uses ammonia as a nitrogen source. In Aliivibrio fischeri (strain MJ11) (Vibrio fischeri), this protein is NH(3)-dependent NAD(+) synthetase.